A 683-amino-acid chain; its full sequence is E3 ubiquitin-protein ligase WAVH1 (683 aa).

Residues 130–176 (CGICLQSVKSGQGTAIFTAECSHTFHFPCVTSRAAANHNRLASCPVC) form an RING-type; atypical zinc finger. Positions 302–438 (DLVAVLDVSG…AHSRIPIHTI (137 aa)) constitute a VWFA domain.

In terms of tissue distribution, expressed in root tips and leaf primordia.

It catalyses the reaction S-ubiquitinyl-[E2 ubiquitin-conjugating enzyme]-L-cysteine + [acceptor protein]-L-lysine = [E2 ubiquitin-conjugating enzyme]-L-cysteine + N(6)-ubiquitinyl-[acceptor protein]-L-lysine.. Its function is as follows. E3 ubiquitin-protein ligase involved in the regulation of root growth. Acts as a positive regulator of root gravitropism. Possesses E3 protein ligase activity in vitro. This is E3 ubiquitin-protein ligase WAVH1 from Arabidopsis thaliana (Mouse-ear cress).